Reading from the N-terminus, the 428-residue chain is ATP-dependent RNA helicase RhlB (428 aa).

Positions 9 to 37 match the Q motif motif; sequence KKFSDFALHPKVIEALDNKGFSNCTPIQA. The region spanning 40 to 219 is the Helicase ATP-binding domain; sequence LPFTVEGRDV…FEQMNHAEYI (180 aa). 53–60 contacts ATP; sequence AQTGTGKT. The DEAD box signature appears at 165–168; that stretch reads DEAD. The Helicase C-terminal domain maps to 245–390; that stretch reads RLLQTLLEEE…VSKYNSQALL (146 aa). Residues 392 to 428 form a disordered region; the sequence is DLPAPKRRYRSRSGNHQRRNNLSHRNNTPRNNRKRSG. Basic residues predominate over residues 396 to 413; that stretch reads PKRRYRSRSGNHQRRNNL.

This sequence belongs to the DEAD box helicase family. RhlB subfamily. As to quaternary structure, component of the RNA degradosome, which is a multiprotein complex involved in RNA processing and mRNA degradation.

Its subcellular location is the cytoplasm. It catalyses the reaction ATP + H2O = ADP + phosphate + H(+). DEAD-box RNA helicase involved in RNA degradation. Has RNA-dependent ATPase activity and unwinds double-stranded RNA. This chain is ATP-dependent RNA helicase RhlB, found in Photorhabdus laumondii subsp. laumondii (strain DSM 15139 / CIP 105565 / TT01) (Photorhabdus luminescens subsp. laumondii).